We begin with the raw amino-acid sequence, 298 residues long: UDP-N-acetylenolpyruvoylglucosamine reductase (298 aa).

One can recognise an FAD-binding PCMH-type domain in the interval 27–191 (TGGEADVFVM…LDATFSLALE (165 aa)). Residue R170 is part of the active site. S220 serves as the catalytic Proton donor. E290 is an active-site residue.

This sequence belongs to the MurB family. It depends on FAD as a cofactor.

The protein resides in the cytoplasm. The catalysed reaction is UDP-N-acetyl-alpha-D-muramate + NADP(+) = UDP-N-acetyl-3-O-(1-carboxyvinyl)-alpha-D-glucosamine + NADPH + H(+). The protein operates within cell wall biogenesis; peptidoglycan biosynthesis. Functionally, cell wall formation. The protein is UDP-N-acetylenolpyruvoylglucosamine reductase of Listeria monocytogenes serotype 4a (strain HCC23).